Reading from the N-terminus, the 196-residue chain is Nucleoid occlusion factor SlmA (196 aa).

The HTH tetR-type domain maps to 7–68; it reads INRREEILQA…GLIEFIEESL (62 aa). Positions 31–50 form a DNA-binding region, H-T-H motif; the sequence is TTAKLAKQVGVSEAALYRHF. Positions 110 to 139 form a coiled coil; it reads HALMFENERLRDRINQLFERIETSLRQILR.

This sequence belongs to the nucleoid occlusion factor SlmA family. As to quaternary structure, homodimer. Interacts with FtsZ.

It is found in the cytoplasm. The protein localises to the nucleoid. Functionally, required for nucleoid occlusion (NO) phenomenon, which prevents Z-ring formation and cell division over the nucleoid. Acts as a DNA-associated cell division inhibitor that binds simultaneously chromosomal DNA and FtsZ, and disrupts the assembly of FtsZ polymers. SlmA-DNA-binding sequences (SBS) are dispersed on non-Ter regions of the chromosome, preventing FtsZ polymerization at these regions. In Vibrio cholerae serotype O1 (strain ATCC 39315 / El Tor Inaba N16961), this protein is Nucleoid occlusion factor SlmA.